Reading from the N-terminus, the 116-residue chain is Large ribosomal subunit protein bL19 (116 aa).

The protein belongs to the bacterial ribosomal protein bL19 family.

This protein is located at the 30S-50S ribosomal subunit interface and may play a role in the structure and function of the aminoacyl-tRNA binding site. The protein is Large ribosomal subunit protein bL19 of Shewanella loihica (strain ATCC BAA-1088 / PV-4).